A 31-amino-acid polypeptide reads, in one-letter code: Cytochrome b6-f complex subunit 6 (31 aa).

The chain crosses the membrane as a helical span at residues 4–26 (ITSYFGFLLAASTITPALLIGLS).

Belongs to the PetL family. In terms of assembly, the 4 large subunits of the cytochrome b6-f complex are cytochrome b6, subunit IV (17 kDa polypeptide, PetD), cytochrome f and the Rieske protein, while the 4 small subunits are PetG, PetL, PetM and PetN. The complex functions as a dimer.

Its subcellular location is the plastid. It is found in the chloroplast thylakoid membrane. Its function is as follows. Component of the cytochrome b6-f complex, which mediates electron transfer between photosystem II (PSII) and photosystem I (PSI), cyclic electron flow around PSI, and state transitions. PetL is important for photoautotrophic growth as well as for electron transfer efficiency and stability of the cytochrome b6-f complex. The polypeptide is Cytochrome b6-f complex subunit 6 (Illicium oligandrum (Star anise)).